The chain runs to 481 residues: Amino acid permease 6 (481 aa).

Over 1–36 the chain is Cytoplasmic; it reads MEKKKSMFVEQSFPEHEIGDTNKNFDEDGRDKRTGT. A run of 2 helical transmembrane segments spans residues 37-57 and 58-78; these read WMTG…LSLA and WAIA…FSFI. Residues 79-125 lie on the Cytoplasmic side of the membrane; it reads TYFTSTMLADCYRSPDPVTGKRNYTYMEVVRSYLGGRKVQLCGLAQY. A helical membrane pass occupies residues 126 to 146; sequence GNLIGITIGYTITASISMVAV. At 147–167 the chain is on the extracellular side; the sequence is KRSNCFHKNGHNVKCATSNTP. Residues 168–188 traverse the membrane as a helical segment; it reads FMIIFAIIQIILSQIPNFHNL. Over 189–190 the chain is Cytoplasmic; it reads SW. The helical transmembrane segment at 191–211 threads the bilayer; it reads LSILAAVMSFCYASIGVGLSI. Topologically, residues 212–242 are extracellular; it reads AKAAGGGEHVRTTLTGVTVGIDVSGAEKIWR. Residues 243 to 263 traverse the membrane as a helical segment; it reads TFQAIGDIAFAYAYSTVLIEI. Topologically, residues 264–283 are cytoplasmic; the sequence is QDTLKAGPPSENKAMKRASL. Residues 284 to 304 form a helical membrane-spanning segment; it reads VGVSTTTFFYMLCGCVGYAAF. Topologically, residues 305–321 are extracellular; it reads GNDAPGNFLTGFGFYEP. Residues 322–342 form a helical membrane-spanning segment; it reads FWLIDFANVCIAVHLIGAYQV. At 343-385 the chain is on the cytoplasmic side; that stretch reads FCQPIFQFVESQSAKRWPDNKFITGEYKIHVPCCGDFSINFLR. The helical transmembrane segment at 386–405 threads the bilayer; sequence LVWRTSYVVVTAVVAMIFPF. The Extracellular portion of the chain corresponds to 406–408; it reads FND. A helical transmembrane segment spans residues 409-427; it reads FLGLIGAASFWPLTVYFPI. Over 428–447 the chain is Cytoplasmic; that stretch reads EMHIAQKKIPKFSFTWTWLK. A helical membrane pass occupies residues 448 to 468; the sequence is ILSWTCFIVSLVAAAGSVQGL. Residues 469-481 are Extracellular-facing; that stretch reads IQSLKDFKPFQAP.

It belongs to the amino acid/polyamine transporter 2 family. Amino acid/auxin permease (AAAP) (TC 2.A.18.2) subfamily. In terms of tissue distribution, expressed in roots and leaves, and at lower levels in stems and flowers. Found in the xylem parenchyma.

The protein resides in the cell membrane. Amino acid-proton symporter. Stereospecific transporter with a broad specificity for tryptophan, proline, and neutral and acidic amino acids. Has an affinity for aspartate in a physiological range. Involved in the uptake of amino acids diffusing out of the xylem tracheids into the xylem parenchyma. The chain is Amino acid permease 6 (AAP6) from Arabidopsis thaliana (Mouse-ear cress).